Here is a 353-residue protein sequence, read N- to C-terminus: Photosystem II D2 protein (353 aa).

T2 is modified (N-acetylthreonine). Residue T2 is modified to Phosphothreonine. The chain crosses the membrane as a helical span at residues 41–61 (CAYFALGGWFTGTTFVTSWYT). Residue H118 coordinates chlorophyll a. The helical transmembrane segment at 125–141 (GFMLRQFEIARSVNLRP) threads the bilayer. Q130 and N143 together coordinate pheophytin a. The chain crosses the membrane as a helical span at residues 153-166 (VFVSVFLIYPLGQS). H198 provides a ligand contact to chlorophyll a. The helical transmembrane segment at 208–228 (AALLCAIHGATVENTLFEDGD) threads the bilayer. 2 residues coordinate a plastoquinone: H215 and F262. Residue H215 participates in Fe cation binding. Position 269 (H269) interacts with Fe cation. Residues 279–295 (GLWMSAIGVVGLALNLR) form a helical membrane-spanning segment.

The protein belongs to the reaction center PufL/M/PsbA/D family. As to quaternary structure, PSII is composed of 1 copy each of membrane proteins PsbA, PsbB, PsbC, PsbD, PsbE, PsbF, PsbH, PsbI, PsbJ, PsbK, PsbL, PsbM, PsbT, PsbX, PsbY, PsbZ, Psb30/Ycf12, at least 3 peripheral proteins of the oxygen-evolving complex and a large number of cofactors. It forms dimeric complexes. Requires The D1/D2 heterodimer binds P680, chlorophylls that are the primary electron donor of PSII, and subsequent electron acceptors. It shares a non-heme iron and each subunit binds pheophytin, quinone, additional chlorophylls, carotenoids and lipids. There is also a Cl(-1) ion associated with D1 and D2, which is required for oxygen evolution. The PSII complex binds additional chlorophylls, carotenoids and specific lipids. as cofactor.

The protein resides in the plastid. It is found in the chloroplast thylakoid membrane. It carries out the reaction 2 a plastoquinone + 4 hnu + 2 H2O = 2 a plastoquinol + O2. Functionally, photosystem II (PSII) is a light-driven water:plastoquinone oxidoreductase that uses light energy to abstract electrons from H(2)O, generating O(2) and a proton gradient subsequently used for ATP formation. It consists of a core antenna complex that captures photons, and an electron transfer chain that converts photonic excitation into a charge separation. The D1/D2 (PsbA/PsbD) reaction center heterodimer binds P680, the primary electron donor of PSII as well as several subsequent electron acceptors. D2 is needed for assembly of a stable PSII complex. This Tetradesmus obliquus (Green alga) protein is Photosystem II D2 protein.